A 360-amino-acid polypeptide reads, in one-letter code: Protein Wnt-2 (360 aa).

An N-terminal signal peptide occupies residues 1-25; it reads MNSPLRGIWLWLPLLLTWLTPEVSS. 11 disulfide bridges follow: C76/C87, C127/C135, C137/C157, C206/C220, C208/C215, C278/C309, C294/C304, C308/C348, C324/C339, C326/C336, and C331/C332. Residue S212 is the site of O-palmitoleoyl serine; by PORCN attachment. A glycan (N-linked (GlcNAc...) asparagine) is linked at N295.

It belongs to the Wnt family. Palmitoleoylation is required for efficient binding to frizzled receptors. Depalmitoleoylation leads to Wnt signaling pathway inhibition.

Its subcellular location is the secreted. It localises to the extracellular space. It is found in the extracellular matrix. In terms of biological role, ligand for members of the frizzled family of seven transmembrane receptors. Probable developmental protein. May be a signaling molecule which affects the development of discrete regions of tissues. Is likely to signal over only few cell diameters. In Ateles geoffroyi (Black-handed spider monkey), this protein is Protein Wnt-2 (WNT2).